Here is a 280-residue protein sequence, read N- to C-terminus: Delta(3,5)-Delta(2,4)-dienoyl-CoA isomerase (280 aa).

The Proton donor/acceptor role is filled by Glu154. The short motif at 278-280 (HKL) is the Peroxisome targeting signal (PTS1) element.

It belongs to the enoyl-CoA hydratase/isomerase family.

It localises to the cytoplasm. Its subcellular location is the cytosol. The protein resides in the peroxisome. The enzyme catalyses a (3E,5Z)-dienoyl-CoA = a (2E,4E)-(5,6-saturated)-dienoyl-CoA. Its pathway is lipid metabolism; fatty acid beta-oxidation. In terms of biological role, peroxisomal di-isomerase that is involved in fatty acid metabolism enzyme by converting 3,5-dienoyl-CoAs to the corresponding 2,4-dienoyl-CoAs. Involved in fatty acid beta-oxidation, which is important for lipid droplets degradation and infectious growth. This Pyricularia oryzae (strain 70-15 / ATCC MYA-4617 / FGSC 8958) (Rice blast fungus) protein is Delta(3,5)-Delta(2,4)-dienoyl-CoA isomerase.